The following is a 390-amino-acid chain: 3,5-dihydroxyphenylacetyl-CoA synthase (390 aa).

C173 is an active-site residue.

It belongs to the thiolase-like superfamily. Chalcone/stilbene synthases family.

The catalysed reaction is 4 malonyl-CoA + 4 H(+) = (3,5-dihydroxyphenyl)acetyl-CoA + 4 CO2 + 3 CoA + H2O. It functions in the pathway antibiotic biosynthesis; vancomycin biosynthesis. In terms of biological role, involved in the biosynthesis of the nonproteinogenic amino acid monomer (S)-3,5-dihydroxyphenylglycine (Dpg) responsible of the production of vancomycin and teicoplanin antibiotics. Catalyzes the Claisen condensation of four molecules of malonyl-CoA to yield 3,5-dihydroxyphenylacetyl-CoA (DPA-CoA) and three free coenzyme A (CoA). DpgA requires the presence of the dehydratases DpgB and DpgD to facilitate the aromatization of the DPA-S-DgpA or DPA-S-CoA intermediate. This Streptomyces toyocaensis protein is 3,5-dihydroxyphenylacetyl-CoA synthase.